A 737-amino-acid chain; its full sequence is Catalase-peroxidase 2 (737 aa).

Positions 1–33 (MPEATEHPPIGEAQTEPAQSGCPMVIKPPVEGG) are disordered. The tryptophyl-tyrosyl-methioninium (Trp-Tyr) (with M-261) cross-link spans 107–235 (WHAAGTYRVQ…LGASHMGLIY (129 aa)). H108 serves as the catalytic Proton acceptor. A cross-link (tryptophyl-tyrosyl-methioninium (Tyr-Met) (with W-107)) is located at residues 235–261 (YVNPEGPEGNPDPIAAAIDIRETFGRM). A heme-binding site is contributed by H276.

It belongs to the peroxidase family. Peroxidase/catalase subfamily. In terms of assembly, homodimer or homotetramer. Requires heme b as cofactor. In terms of processing, formation of the three residue Trp-Tyr-Met cross-link is important for the catalase, but not the peroxidase activity of the enzyme.

The catalysed reaction is H2O2 + AH2 = A + 2 H2O. It carries out the reaction 2 H2O2 = O2 + 2 H2O. Bifunctional enzyme with both catalase and broad-spectrum peroxidase activity. The protein is Catalase-peroxidase 2 of Mycolicibacterium vanbaalenii (strain DSM 7251 / JCM 13017 / BCRC 16820 / KCTC 9966 / NRRL B-24157 / PYR-1) (Mycobacterium vanbaalenii).